The following is a 941-amino-acid chain: Bifunctional glutamine synthetase adenylyltransferase/adenylyl-removing enzyme (941 aa).

The segment at 1-431 is adenylyl removase; it reads MSSAPPFAAA…TFRNAFRLAG (431 aa). An adenylyl transferase region spans residues 447–941; that stretch reads NGHAMRPHAG…DGTIAQAEVK (495 aa).

Belongs to the GlnE family. Requires Mg(2+) as cofactor.

The enzyme catalyses [glutamine synthetase]-O(4)-(5'-adenylyl)-L-tyrosine + phosphate = [glutamine synthetase]-L-tyrosine + ADP. It catalyses the reaction [glutamine synthetase]-L-tyrosine + ATP = [glutamine synthetase]-O(4)-(5'-adenylyl)-L-tyrosine + diphosphate. In terms of biological role, involved in the regulation of glutamine synthetase GlnA, a key enzyme in the process to assimilate ammonia. When cellular nitrogen levels are high, the C-terminal adenylyl transferase (AT) inactivates GlnA by covalent transfer of an adenylyl group from ATP to specific tyrosine residue of GlnA, thus reducing its activity. Conversely, when nitrogen levels are low, the N-terminal adenylyl removase (AR) activates GlnA by removing the adenylyl group by phosphorolysis, increasing its activity. The regulatory region of GlnE binds the signal transduction protein PII (GlnB) which indicates the nitrogen status of the cell. This Bordetella pertussis (strain Tohama I / ATCC BAA-589 / NCTC 13251) protein is Bifunctional glutamine synthetase adenylyltransferase/adenylyl-removing enzyme.